Consider the following 120-residue polypeptide: Large ribosomal subunit protein uL18 (120 aa).

Belongs to the universal ribosomal protein uL18 family. In terms of assembly, part of the 50S ribosomal subunit; part of the 5S rRNA/L5/L18/L25 subcomplex. Contacts the 5S and 23S rRNAs.

In terms of biological role, this is one of the proteins that bind and probably mediate the attachment of the 5S RNA into the large ribosomal subunit, where it forms part of the central protuberance. This is Large ribosomal subunit protein uL18 from Halalkalibacterium halodurans (strain ATCC BAA-125 / DSM 18197 / FERM 7344 / JCM 9153 / C-125) (Bacillus halodurans).